A 249-amino-acid chain; its full sequence is 5'-nucleotidase SurE (249 aa).

A divalent metal cation-binding residues include D9, D10, S40, and N92.

It belongs to the SurE nucleotidase family. Requires a divalent metal cation as cofactor.

It localises to the cytoplasm. The enzyme catalyses a ribonucleoside 5'-phosphate + H2O = a ribonucleoside + phosphate. Functionally, nucleotidase that shows phosphatase activity on nucleoside 5'-monophosphates. This chain is 5'-nucleotidase SurE, found in Shewanella oneidensis (strain ATCC 700550 / JCM 31522 / CIP 106686 / LMG 19005 / NCIMB 14063 / MR-1).